Here is a 72-residue protein sequence, read N- to C-terminus: Translational regulator CsrA (72 aa).

It belongs to the CsrA/RsmA family. As to quaternary structure, homodimer; the beta-strands of each monomer intercalate to form a hydrophobic core, while the alpha-helices form wings that extend away from the core.

It localises to the cytoplasm. Functionally, a translational regulator that binds mRNA to regulate translation initiation and/or mRNA stability. Usually binds in the 5'-UTR at or near the Shine-Dalgarno sequence preventing ribosome-binding, thus repressing translation. Its main target seems to be the major flagellin gene, while its function is anatagonized by FliW. The polypeptide is Translational regulator CsrA (Clostridium novyi (strain NT)).